The sequence spans 193 residues: Cysteine and glycine-rich protein 1 (193 aa).

Positions 10–61 (CGVCQKTVYFAEEVQCEGSSFHKSCFLCLVCKKNLDSTTVAVHGEEIYCKSC) constitute an LIM zinc-binding 1 domain. A Nuclear localization signal motif is present at residues 64-69 (KKYGPK). At serine 81 the chain carries Phosphoserine. Residues lysine 84, lysine 112, lysine 131, lysine 137, and lysine 161 each carry the N6-acetyllysine modification. An LIM zinc-binding 2 domain is found at 119–170 (CPRCSQAVYAAEKVIGAGKSWHKSCFRCAKCGKGLESTTLADKDGEIYCKGC). The residue at position 192 (serine 192) is a Phosphoserine.

In terms of assembly, interacts with ASCC1; ASCC2 and TRIP4.

Its subcellular location is the nucleus. Its function is as follows. Could play a role in neuronal development. This chain is Cysteine and glycine-rich protein 1 (CSRP1), found in Bos taurus (Bovine).